A 520-amino-acid chain; its full sequence is Amine oxidase [flavin-containing] B (520 aa).

Ser2 bears the N-acetylserine mark. Residues 2–489 are Cytoplasmic-facing; the sequence is SNKCDVIVVG…TFLERHLPSV (488 aa). Lys52 carries the post-translational modification N6-acetyllysine. At Cys397 the chain carries S-8alpha-FAD cysteine. A helical; Anchor for type IV membrane protein transmembrane segment spans residues 490–516; it reads PGLLKLLGLTTILSATALGFLAHKKGL. Over 517–520 the chain is Mitochondrial intermembrane; the sequence is FVRF.

The protein belongs to the flavin monoamine oxidase family. As to quaternary structure, monomer, homo- or heterodimer (containing two subunits of similar size). Each subunit contains a covalently bound flavin. Enzymatically active as monomer. FAD is required as a cofactor.

The protein localises to the mitochondrion outer membrane. The enzyme catalyses a secondary aliphatic amine + O2 + H2O = a primary amine + an aldehyde + H2O2. It catalyses the reaction (R)-adrenaline + O2 + H2O = (R)-3,4-dihydroxymandelaldehyde + methylamine + H2O2. The catalysed reaction is a primary methyl amine + O2 + H2O = an aldehyde + H2O2 + NH4(+). It carries out the reaction dopamine + O2 + H2O = 3,4-dihydroxyphenylacetaldehyde + H2O2 + NH4(+). The enzyme catalyses tyramine + O2 + H2O = (4-hydroxyphenyl)acetaldehyde + H2O2 + NH4(+). It catalyses the reaction (R)-noradrenaline + O2 + H2O = (R)-3,4-dihydroxymandelaldehyde + H2O2 + NH4(+). The catalysed reaction is benzylamine + O2 + H2O = benzaldehyde + H2O2 + NH4(+). It carries out the reaction 2-phenylethylamine + O2 + H2O = 2-phenylacetaldehyde + H2O2 + NH4(+). The enzyme catalyses N-acetylputrescine + O2 + H2O = 4-acetamidobutanal + H2O2 + NH4(+). In terms of biological role, catalyzes the oxidative deamination of primary and some secondary amines such as neurotransmitters, and exogenous amines including the tertiary amine, neurotoxin 1-methyl-4-phenyl-1,2,3,6-tetrahydropyridine (MPTP), with concomitant reduction of oxygen to hydrogen peroxide and participates in the metabolism of neuroactive and vasoactive amines in the central nervous system and peripheral tissues. Preferentially degrades benzylamine and phenylethylamine. This chain is Amine oxidase [flavin-containing] B, found in Rattus norvegicus (Rat).